A 73-amino-acid polypeptide reads, in one-letter code: uncharacterized protein (73 aa).

This is an uncharacterized protein from Saccharolobus islandicus (Sulfolobus islandicus).